The sequence spans 539 residues: SAGA complex/transcription factor TFIID complex subunit TAF12 (539 aa).

2 disordered regions span residues 1–28 and 86–129; these read MSSN…TGAQ and QQAA…RNNS. An N-acetylserine modification is found at Ser-2. Composition is skewed to low complexity over residues 7-27 and 87-105; these read NSGV…ITGA and QAAQ…NPAS. Position 129 is a phosphoserine (Ser-129). Coiled-coil stretches lie at residues 153 to 202 and 239 to 285; these read QNFQ…LLND and LQES…QRKI. Over residues 274–283 the composition is skewed to low complexity; the sequence is QQQRQGQNQR. The tract at residues 274 to 332 is disordered; it reads QQQRQGQNQRKISSSNSTEIPSVTGPDALKSQQQQQNTITATNNPRGNVNTSQTEQSKA. Composition is skewed to polar residues over residues 284-294 and 310-332; these read KISSSNSTEIP and NTIT…QSKA. A Phosphoserine modification is found at Ser-286. Positions 413–490 constitute a Histone-fold domain; it reads RVMSKRKLRE…HLERNWNIRI (78 aa).

It belongs to the TAF12 family. In terms of assembly, component of the 1.8 MDa SAGA (Spt-Ada-Gcn5 acetyltransferase) complex, which is composed of 19 subunits TRA1, SPT7, TAF5, NGG1/ADA3, SGF73, SPT20/ADA5, SPT8, TAF12, TAF6, HFI1/ADA1, UBP8, GCN5, ADA2, SPT3, SGF29, TAF10, TAF9, SGF11 and SUS1. The SAGA complex is composed of 4 modules, namely the HAT (histone acetyltransferase) module (GCN5, ADA2, NGG1/ADA3 and SGF29), the DUB (deubiquitinating) module (UBP8, SGF11, SGF73 and SUS1), the core or TAF (TBP-associated factor) module (TAF5, TAF6, TAF9, TAF10 and TAF12), and the Tra1 or SPT (Suppressor of Ty) module (TRA1, HFI1/ADA1, SPT3, SPT7, SPT8 and SPT20/ADA5). The Tra1/SPT module binds activators, the core module recruits TBP (TATA-binding protein), the HAT module contains the histone H3 acetyltransferase GCN5, and the DUB module comprises the histone H2B deubiquitinase UBP8. Also identified in an altered form of SAGA, named SALSA (SAGA altered, Spt8 absent) or SLIK (SAGA-like) complex, which contains a C-terminal truncated form of SPT7 and is missing SPT8. However, it has been shown that the SAGA and SAGA-like SALSA/SLIK transcriptional coactivators are structurally and biochemically equivalent. Component of the 1.2 MDa TFIID complex, which is composed of TATA-binding protein (TBP) and the 14 TBP-associated factors (TAFs). It comprises 1 copy of each TAF1, TAF2, TAF3, TAF7, TAF8, TAF11, TAF13, 2 copies of each TAF4, TAF5, TAF6, TAF9, TAF10, TAF12, and 3 copies of TAF14. In TFIID, TAF12 heterodimerizes with TAF4, forming ultimately an octamer consisting of a TAF6-TAF9 heterotetramer core flanked by TAF4-TAF12 dimers on either side, similar to the histone H2A-H2B-H3-H4 octamer.

Its subcellular location is the nucleus. In terms of biological role, functions as a component of both the DNA-binding general transcription initiation factor complex TFIID and the transcription coactivator SAGA complex. Binding of TFIID to a promoter (with or without TATA element) is the initial step in pre-initiation complex (PIC) formation. TFIID plays a key role in the regulation of gene expression by RNA polymerase II through different activities such as transcription activator interaction, core promoter recognition and selectivity, TFIIA and TFIIB interaction, chromatin modification (histone acetylation by TAF1), facilitation of DNA opening and initiation of transcription. SAGA acts as a general cofactor required for essentially all RNA polymerase II transcription. At the promoters, SAGA is required for transcription pre-initiation complex (PIC) recruitment. It influences RNA polymerase II transcriptional activity through different activities such as TBP interaction (via core/TAF module) and promoter selectivity, interaction with transcription activators (via Tra1/SPT module), and chromatin modification through histone acetylation (via HAT module) and deubiquitination (via DUB module). SAGA preferentially acetylates histones H3 (to form H3K9ac, H3K14ac, H3K18ac and H3K23ac) and H2B and deubiquitinates histone H2B. SAGA interacts with DNA via upstream activating sequences (UASs). Also identified in a modified version of SAGA named SALSA or SLIK. The cleavage of SPT7 and the absence of the SPT8 subunit in SLIK neither drive any major conformational differences in its structure compared with SAGA, nor significantly affect HAT, DUB, or DNA-binding activities. The sequence is that of SAGA complex/transcription factor TFIID complex subunit TAF12 (TAF12) from Saccharomyces cerevisiae (strain ATCC 204508 / S288c) (Baker's yeast).